The primary structure comprises 346 residues: MLKSFEKHLNAVSRKCCNFILGSSIPVLGFYCADTCIRNAFMEFMETRNSKSKYVEAFNTVQSNGATSAISTFHILKDEIIRRIPLLPIIQELRETRMSEVSAEEKILLWNQLKFMSLVRMFTTLAVLAQCNLLCKLALTVLGREAFKEQMVKEFDPSNTLRPSGSDEDPAVFTGIAYILLNNQLDELIQQVQLAVTLTFEEVSPTDIVDRKLIEALTTRVVEVFVNNYQFSIDGNKEVLLAEIPKQYIVTGNLLYRVLELEDFATQMDASIVMKNELIALNEHMLTYLPSIPQEGIRLAKILTTFTKISENVFEAPFQEQFFQSLQMVSDVNRYMAIVFSSFDDC.

This is an uncharacterized protein from Schizosaccharomyces pombe (strain 972 / ATCC 24843) (Fission yeast).